Here is a 256-residue protein sequence, read N- to C-terminus: MDPTCSSECIYNLIPSDLKEPPQPPRYISIFKATVKDDMQKAKTAMKTMGPAKVEVPSPKDFLKKHSKEKTLPPKKNFDRNVPKKPAVPLKTDHPVMGIQSGKNFINTNAADIIMGVAKKPKPIYVDKRTGDKHDLEPSGLVPKYINKKDYGVTPEYICKRNEEIKKAQEDYDRYIQENLKKAAMKRLSDEEREAVLQGLKKNWEEVHKEFQSLSVFIDSIPKKIRKQRLEEEMKQLEHDIGIIEKHKIIYIANNA.

The SH3-binding motif lies at 83–89; it reads PKKPAVP. The Enkurin domain occupies 160-252; it reads KRNEEIKKAQ…IIEKHKIIYI (93 aa). The tract at residues 160–255 is interaction with TRPC proteins; sequence KRNEEIKKAQ…KHKIIYIANN (96 aa). One can recognise an IQ domain in the interval 176-187; that stretch reads IQENLKKAAMKR.

In terms of assembly, microtubule inner protein component of sperm flagellar doublet microtubules. Binds calmodulin via its IQ domain. Interacts with TRPC1, TRPC2, TRPC5, but not TRPC3. Interacts with CFAP45. In terms of tissue distribution, expressed in airway epithelial cells.

The protein resides in the cytoplasm. It is found in the cytoskeleton. It localises to the cilium axoneme. Its subcellular location is the flagellum axoneme. In terms of biological role, adapter that functions to localize a calcium-sensitive signal transduction machinery in sperm to a calcium-permeable ion channel. Microtubule inner protein (MIP) part of the dynein-decorated doublet microtubules (DMTs) in cilia axoneme, which is required for motile cilia beating. This Homo sapiens (Human) protein is Enkurin.